The chain runs to 615 residues: DNA mismatch repair protein MutL (615 aa).

The segment at 363-397 (FAEPAVREPVAPRYTPAPASGSRPAAPWPNAQPGY) is disordered. Positions 378–391 (PAPASGSRPAAPWP) are enriched in low complexity.

It belongs to the DNA mismatch repair MutL/HexB family.

This protein is involved in the repair of mismatches in DNA. It is required for dam-dependent methyl-directed DNA mismatch repair. May act as a 'molecular matchmaker', a protein that promotes the formation of a stable complex between two or more DNA-binding proteins in an ATP-dependent manner without itself being part of a final effector complex. The sequence is that of DNA mismatch repair protein MutL from Escherichia coli O157:H7.